Here is a 250-residue protein sequence, read N- to C-terminus: 5'-nucleotidase SurE (250 aa).

Residues Asp-8, Asp-9, Ser-39, and Asn-91 each coordinate a divalent metal cation.

This sequence belongs to the SurE nucleotidase family. A divalent metal cation is required as a cofactor.

The protein localises to the cytoplasm. The catalysed reaction is a ribonucleoside 5'-phosphate + H2O = a ribonucleoside + phosphate. Nucleotidase that shows phosphatase activity on nucleoside 5'-monophosphates. This chain is 5'-nucleotidase SurE, found in Leptospira borgpetersenii serovar Hardjo-bovis (strain L550).